Here is a 939-residue protein sequence, read N- to C-terminus: Valine--tRNA ligase (939 aa).

The 'HIGH' region motif lies at 47-57; it reads PNVTGILHMGH. The 'KMSKS' region signature appears at 563–567; the sequence is KLSKS. Residue Lys-566 coordinates ATP. Residues 874–939 adopt a coiled-coil conformation; it reads EHLAKERVRL…QSILDKLASL (66 aa).

It belongs to the class-I aminoacyl-tRNA synthetase family. ValS type 1 subfamily. As to quaternary structure, monomer.

Its subcellular location is the cytoplasm. The catalysed reaction is tRNA(Val) + L-valine + ATP = L-valyl-tRNA(Val) + AMP + diphosphate. Its function is as follows. Catalyzes the attachment of valine to tRNA(Val). As ValRS can inadvertently accommodate and process structurally similar amino acids such as threonine, to avoid such errors, it has a 'posttransfer' editing activity that hydrolyzes mischarged Thr-tRNA(Val) in a tRNA-dependent manner. The sequence is that of Valine--tRNA ligase from Chlamydia trachomatis serovar A (strain ATCC VR-571B / DSM 19440 / HAR-13).